Consider the following 96-residue polypeptide: Large ribosomal subunit protein bL28 (96 aa).

Positions 1–23 are disordered; it reads MSRVCELSGKAPMTGNTVSHANN.

This sequence belongs to the bacterial ribosomal protein bL28 family.

The polypeptide is Large ribosomal subunit protein bL28 (Cereibacter sphaeroides (strain ATCC 17025 / ATH 2.4.3) (Rhodobacter sphaeroides)).